The sequence spans 502 residues: Maturase K (502 aa).

It belongs to the intron maturase 2 family. MatK subfamily.

It is found in the plastid. It localises to the chloroplast. Usually encoded in the trnK tRNA gene intron. Probably assists in splicing its own and other chloroplast group II introns. The chain is Maturase K from Cephalotaxus fortunei (Chinese plum-yew).